Here is a 913-residue protein sequence, read N- to C-terminus: Translation initiation factor IF-2 (913 aa).

The disordered stretch occupies residues 1-322 (MTDNNDDKTL…QEKFRRSQMQ (322 aa)). A compositionally biased stretch (low complexity) spans 60–113 (VQPVVAAPKPAAPAPVAARPQAPQPRIHQPGGQQQRPGSSQSQQRSGSSAPQQR). Positions 131–180 (MEARRRALMEAQARDVVEAKQRAEDEARRKVEEEQRIAAEKMEAANRAAE) are enriched in basic and acidic residues. Composition is skewed to low complexity over residues 181–195 (EAAA…PAAE), 203–238 (ERPA…AAAP), and 261–277 (PARG…PAAR). One can recognise a tr-type G domain in the interval 411 to 578 (SRPPVVTIMG…AILLQAEILD (168 aa)). Positions 420–427 (GHVDHGKT) are G1. Position 420–427 (420–427 (GHVDHGKT)) interacts with GTP. The segment at 445-449 (GITQH) is G2. The segment at 466-469 (DTPG) is G3. Residues 466-470 (DTPGH) and 520-523 (NKID) each bind GTP. A G4 region spans residues 520 to 523 (NKID). Residues 556–558 (SAK) form a G5 region.

This sequence belongs to the TRAFAC class translation factor GTPase superfamily. Classic translation factor GTPase family. IF-2 subfamily.

The protein localises to the cytoplasm. One of the essential components for the initiation of protein synthesis. Protects formylmethionyl-tRNA from spontaneous hydrolysis and promotes its binding to the 30S ribosomal subunits. Also involved in the hydrolysis of GTP during the formation of the 70S ribosomal complex. The chain is Translation initiation factor IF-2 from Agrobacterium fabrum (strain C58 / ATCC 33970) (Agrobacterium tumefaciens (strain C58)).